The chain runs to 405 residues: Dynactin subunit 2 (405 aa).

Positions 1–24 are disordered; that stretch reads MADPKYADLPGIARNEPDVYETSD. Residues 101 to 134 adopt a coiled-coil conformation; the sequence is PQQKYQRLLHEIQELTQEVEKAQSTVKESAAEEK. A disordered region spans residues 186–207; that stretch reads AKTRKNPEGKSPAKGPGPDNEN. Residues 383 to 403 adopt a coiled-coil conformation; that stretch reads KENLATVEDNFTSIDARIKKL.

The protein belongs to the dynactin subunit 2 family. As to quaternary structure, subunit of dynactin, a multiprotein complex part of a tripartite complex with dynein and a adapter, such as BICDL1, BICD2 or HOOK3. The dynactin complex is built around ACTR1A/ACTB filament and consists of an actin-related filament composed of a shoulder domain, a pointed end and a barbed end. Its length is defined by its flexible shoulder domain. The soulder is composed of 2 DCTN1 subunits, 4 DCTN2 and 2 DCTN3.

The protein localises to the cytoplasm. It is found in the cytoskeleton. It localises to the microtubule organizing center. The protein resides in the centrosome. Its subcellular location is the membrane. Functionally, part of the dynactin complex that activates the molecular motor dynein for ultra-processive transport along microtubules. In the dynactin soulder domain, binds the ACTR1A filament and acts as a molecular ruler to determine the length. Modulates cytoplasmic dynein binding to an organelle, and plays a role in prometaphase chromosome alignment and spindle organization during mitosis. Involved in anchoring microtubules to centrosomes. The sequence is that of Dynactin subunit 2 (dctn2) from Xenopus tropicalis (Western clawed frog).